The sequence spans 265 residues: Small ribosomal subunit protein uS2 (265 aa).

The interval 231-265 (VEEEYEDYEGAEDDYEYDETEYTDSVIPDDEEEAE) is disordered.

Belongs to the universal ribosomal protein uS2 family.

This Trichormus variabilis (strain ATCC 29413 / PCC 7937) (Anabaena variabilis) protein is Small ribosomal subunit protein uS2.